Reading from the N-terminus, the 269-residue chain is 15-hydroxyprostaglandin dehydrogenase [NAD(+)] (269 aa).

NAD(+)-binding positions include 12 to 20, 36 to 37, 63 to 65, and asparagine 91; these read GAAQGIGKA, DW, and CDV. Substrate is bound by residues serine 138 and glutamine 148. Catalysis depends on tyrosine 151, which acts as the Proton acceptor. Residues 151–155 and 186–188 each bind NAD(+); these read YCASK and VDT.

The protein belongs to the short-chain dehydrogenases/reductases (SDR) family. Homodimer. Expressed in proximal convoluted tubules of the kidney, where it colocalizes with the prostaglandin transporter SLC22A22 (at protein level). Expressed in lung, intestine, stomach and liver.

It localises to the cytoplasm. The enzyme catalyses prostaglandin E2 + NAD(+) = 15-oxoprostaglandin E2 + NADH + H(+). It catalyses the reaction (15S)-hydroxy-(5Z,8Z,11Z,13E)-eicosatetraenoate + NAD(+) = 15-oxo-(5Z,8Z,11Z,13E)-eicosatetraenoate + NADH + H(+). The catalysed reaction is (11R)-hydroxy-(5Z,8Z,12E,14Z)-eicosatetraenoate + NAD(+) = 11-oxo-(5Z,8Z,12E,14Z)-eicosatetraenoate + NADH + H(+). It carries out the reaction lipoxin A4 + NAD(+) = 15-oxo-(5S,6R)-dihydroxy-(7E,9E,11Z,13E)-eicosatetraenoate + NADH + H(+). The enzyme catalyses 15-oxo-(5S,6R)-dihydroxy-(7E,9E,11Z)-eicosatrienoate + NADH + H(+) = (5S,6R,15S)-trihydroxy-(7E,9E,11Z)-eicosatrienoate + NAD(+). It catalyses the reaction prostaglandin A1 + NAD(+) = 15-oxo-prostaglandin A1 + NADH + H(+). The catalysed reaction is prostaglandin E1 + NAD(+) = 15-oxoprostaglandin E1 + NADH + H(+). It carries out the reaction 14-hydroxy-(4Z,7Z,10Z,12E,16Z,19Z)-docosahexaenoate + NAD(+) = 14-oxo-(4Z,7Z,10Z,12E,16Z,19Z)-docosahexaenoate + NADH + H(+). The enzyme catalyses resolvin E1 + NAD(+) = 18-oxo-resolvin E1 + NADH + H(+). It catalyses the reaction resolvin D1 + NAD(+) = 8-oxoresolvin D1 + NADH + H(+). The catalysed reaction is resolvin D1 + NAD(+) = 17-oxoresolvin D1 + NADH + H(+). It carries out the reaction resolvin D2 + NAD(+) = 7-oxoresolvin D2 + NADH + H(+). The enzyme catalyses resolvin D2 + NAD(+) = 16-oxoresolvin D2 + NADH + H(+). Catalyzes the NAD-dependent dehydrogenation (oxidation) of a broad array of hydroxylated polyunsaturated fatty acids (mainly eicosanoids and docosanoids, including prostaglandins, lipoxins and resolvins), yielding their corresponding keto (oxo) metabolites. Decreases the levels of the pro-proliferative prostaglandins such as prostaglandin E2 (whose activity is increased in cancer because of an increase in the expression of cyclooxygenase 2) and generates oxo-fatty acid products that can profoundly influence cell function by abrogating pro-inflammatory cytokine expression. Converts resolvins E1, D1 and D2 to their oxo products, which represents a mode of resolvin inactivation. Resolvin E1 plays important roles during the resolution phase of acute inflammation, while resolvins D1 and D2 have a unique role in obesity-induced adipose inflammation. The protein is 15-hydroxyprostaglandin dehydrogenase [NAD(+)] (Hpgd) of Mus musculus (Mouse).